The sequence spans 212 residues: Uridine kinase (212 aa).

Residue 13–20 (GASASGKS) coordinates ATP.

The protein belongs to the uridine kinase family.

The protein localises to the cytoplasm. The enzyme catalyses uridine + ATP = UMP + ADP + H(+). The catalysed reaction is cytidine + ATP = CMP + ADP + H(+). Its pathway is pyrimidine metabolism; CTP biosynthesis via salvage pathway; CTP from cytidine: step 1/3. It participates in pyrimidine metabolism; UMP biosynthesis via salvage pathway; UMP from uridine: step 1/1. This is Uridine kinase from Shewanella frigidimarina (strain NCIMB 400).